We begin with the raw amino-acid sequence, 395 residues long: Glutamate N-acetyltransferase (395 aa).

Substrate-binding residues include threonine 146, lysine 169, threonine 180, glutamate 263, asparagine 390, and threonine 395. Residue threonine 180 is the Nucleophile of the active site.

This sequence belongs to the ArgJ family. In terms of assembly, heterotetramer of two alpha and two beta chains.

Its subcellular location is the cytoplasm. It catalyses the reaction N(2)-acetyl-L-ornithine + L-glutamate = N-acetyl-L-glutamate + L-ornithine. It participates in amino-acid biosynthesis; L-arginine biosynthesis; L-ornithine and N-acetyl-L-glutamate from L-glutamate and N(2)-acetyl-L-ornithine (cyclic): step 1/1. In terms of biological role, catalyzes the transfer of the acetyl group from N(2)-acetylornithine to glutamate, forming N-acetylglutamate and L-ornithine. The polypeptide is Glutamate N-acetyltransferase (Methanosarcina acetivorans (strain ATCC 35395 / DSM 2834 / JCM 12185 / C2A)).